Here is a 619-residue protein sequence, read N- to C-terminus: Vitamin B12 transporter BtuB (619 aa).

The signal sequence occupies residues 1-25 (MINKKRLLLSTVSIMVISGWNQASA). A TonB box motif is present at residues 31–38 (DSLVVTAS). One can recognise a TBDR plug domain in the interval 43–157 (PISSILAPYT…IGGVINIITT (115 aa)). Cyanocob(III)alamin-binding positions include leucine 88, serine 90, and 115 to 116 (IS). Residues 160–619 (KLGTSLNVGI…EYYLTGSYNF (460 aa)) enclose the TBDR beta-barrel domain. Transmembrane regions (beta stranded) follow at residues 163–170 (TSLNVGIG), 174–183 (YQTYDGATQQ), and 189–200 (TVLTAAANYTYT). Ca(2+)-binding residues include aspartate 204, glutamine 216, aspartate 218, and aspartate 220. A run of 2 beta stranded transmembrane segments spans residues 222–232 (FMSKMLWLGVD) and 237–253 (EQVS…NRTS). Positions 254 and 255 each coordinate Ca(2+). Alanine 256 contacts cyanocob(III)alamin. Aspartate 268 contributes to the Ca(2+) binding site. Beta stranded transmembrane passes span 270 to 284 (RELY…VRFN), 286 to 303 (GIYS…KDYN), 316 to 332 (SLND…NTFQ), 335 to 344 (QGIVSTGVDF), 360 to 376 (KTVR…QQLK), 378 to 388 (FILEGAIRSDK), 392 to 407 (AGWN…WEFI), 410 to 424 (YRLI…KAPT), 441 to 450 (ESKQWEGGIE), 456 to 465 (LTWRMTVYRN), 478 to 495 (YYNI…TGLI), 499 to 514 (MFQH…PRNS), 522 to 534 (RRAK…QLDW), 540 to 556 (DWGL…DKDF), 563 to 577 (RVKL…LTVS), 590 to 601 (IANLLDKDYETV), and 607 to 619 (PGRE…SYNF). A cyanocob(III)alamin-binding site is contributed by serine 316. Residue arginine 522 coordinates cyanocob(III)alamin. The TonB C-terminal box signature appears at 602–619 (YGYRIPGREYYLTGSYNF).

The protein belongs to the TonB-dependent receptor family. BtuB (TC 1.B.14.3.1) subfamily.

The protein resides in the cell outer membrane. Its function is as follows. Involved in the active translocation of vitamin B12 (cyanocobalamin) across the outer membrane to the periplasmic space. It derives its energy for transport by interacting with the trans-periplasmic membrane protein TonB. This Photorhabdus laumondii subsp. laumondii (strain DSM 15139 / CIP 105565 / TT01) (Photorhabdus luminescens subsp. laumondii) protein is Vitamin B12 transporter BtuB.